Reading from the N-terminus, the 432-residue chain is D-amino acid dehydrogenase (432 aa).

Valine 3–tryptophan 17 is a binding site for FAD.

The protein belongs to the DadA oxidoreductase family. FAD is required as a cofactor.

The enzyme catalyses a D-alpha-amino acid + A + H2O = a 2-oxocarboxylate + AH2 + NH4(+). Its pathway is amino-acid degradation; D-alanine degradation; NH(3) and pyruvate from D-alanine: step 1/1. In terms of biological role, oxidative deamination of D-amino acids. This Shigella boydii serotype 18 (strain CDC 3083-94 / BS512) protein is D-amino acid dehydrogenase.